Consider the following 313-residue polypeptide: Probable GTP 3',8-cyclase (313 aa).

One can recognise a Radical SAM core domain in the interval 4–224; it reads RFGRSIEDLR…EIRSKHYRPR (221 aa). Arginine 13 is a GTP binding site. Cysteine 20, cysteine 24, and cysteine 27 together coordinate [4Fe-4S] cluster. Lysine 60 contributes to the GTP binding site. Glycine 64 is a binding site for S-adenosyl-L-methionine. Position 90 (threonine 90) interacts with GTP. Serine 114 contributes to the S-adenosyl-L-methionine binding site. Residue lysine 151 coordinates GTP. Positions 244 and 247 each coordinate [4Fe-4S] cluster. 249-251 provides a ligand contact to GTP; sequence RIR. [4Fe-4S] cluster is bound at residue cysteine 261.

It belongs to the radical SAM superfamily. MoaA family. [4Fe-4S] cluster serves as cofactor.

It carries out the reaction GTP + AH2 + S-adenosyl-L-methionine = (8S)-3',8-cyclo-7,8-dihydroguanosine 5'-triphosphate + 5'-deoxyadenosine + L-methionine + A + H(+). Its pathway is cofactor biosynthesis; molybdopterin biosynthesis. Functionally, catalyzes the cyclization of GTP to (8S)-3',8-cyclo-7,8-dihydroguanosine 5'-triphosphate. The polypeptide is Probable GTP 3',8-cyclase (Sulfurisphaera tokodaii (strain DSM 16993 / JCM 10545 / NBRC 100140 / 7) (Sulfolobus tokodaii)).